We begin with the raw amino-acid sequence, 128 residues long: Large ribosomal subunit protein bL12 (128 aa).

The protein belongs to the bacterial ribosomal protein bL12 family. In terms of assembly, homodimer. Part of the ribosomal stalk of the 50S ribosomal subunit. Forms a multimeric L10(L12)X complex, where L10 forms an elongated spine to which 2 to 4 L12 dimers bind in a sequential fashion. Binds GTP-bound translation factors.

In terms of biological role, forms part of the ribosomal stalk which helps the ribosome interact with GTP-bound translation factors. Is thus essential for accurate translation. This is Large ribosomal subunit protein bL12 from Sorangium cellulosum (strain So ce56) (Polyangium cellulosum (strain So ce56)).